A 417-amino-acid polypeptide reads, in one-letter code: Phosphoglycerate kinase 2 (417 aa).

An N-acetylserine modification is found at serine 2. Serine 2 and serine 4 each carry phosphoserine. Lysine 11 carries the post-translational modification N6-acetyllysine. The (2R)-3-phosphoglycerate site is built by valine 23, aspartate 24, phenylalanine 25, asparagine 26, glutamine 38, and arginine 39. Residue lysine 48 is modified to N6-acetyllysine. Residues serine 62, histidine 63, glycine 65, and arginine 66 each coordinate (2R)-3-phosphoglycerate. 3 positions are modified to N6-acetyllysine: lysine 75, lysine 86, and lysine 97. Residues leucine 122 and arginine 123 each contribute to the (2R)-3-phosphoglycerate site. N6-acetyllysine is present on residues lysine 131 and lysine 146. Histidine 170 and arginine 171 together coordinate (2R)-3-phosphoglycerate. At tyrosine 196 the chain carries Phosphotyrosine. N6-acetyllysine is present on lysine 199. Glycine 214 serves as a coordination point for ADP. Residue glycine 214 coordinates CDP. Alanine 215 and lysine 216 together coordinate AMP. Alanine 215 serves as a coordination point for ATP. A Mg(2+)-binding site is contributed by alanine 215. Residues alanine 218 and aspartate 219 each contribute to the Mg(2+) site. Aspartate 219 is a binding site for CDP. Lysine 220 contacts AMP. Residue lysine 220 coordinates ATP. Glycine 238 contributes to the ADP binding site. Glycine 238 contacts CDP. Glycine 239 contacts AMP. Glycine 239 provides a ligand contact to ATP. Lysine 267 and lysine 291 each carry N6-acetyllysine. Glycine 313 is a binding site for AMP. Glycine 313 provides a ligand contact to ATP. Residues glycine 338, valine 340, and phenylalanine 343 each contribute to the CDP site. Phenylalanine 343 lines the ADP pocket. Glutamate 344 is an AMP binding site. ATP is bound by residues glutamate 344, aspartate 375, and threonine 376. Mg(2+) is bound at residue aspartate 375.

This sequence belongs to the phosphoglycerate kinase family. As to quaternary structure, monomer. Mg(2+) serves as cofactor.

It localises to the cytoplasm. It carries out the reaction (2R)-3-phosphoglycerate + ATP = (2R)-3-phospho-glyceroyl phosphate + ADP. It functions in the pathway carbohydrate degradation; glycolysis; pyruvate from D-glyceraldehyde 3-phosphate: step 2/5. Essential for sperm motility and male fertility but is not required for the completion of spermatogenesis. In Equus caballus (Horse), this protein is Phosphoglycerate kinase 2 (PGK2).